A 214-amino-acid chain; its full sequence is Putative F-box protein At5g15670 (214 aa).

Positions 22 to 68 (RNKFDEIPHDLVIEILGRLPAKSVARFLTVSKLWATSIRSLDFIKSY) constitute an F-box domain.

The polypeptide is Putative F-box protein At5g15670 (Arabidopsis thaliana (Mouse-ear cress)).